The sequence spans 102 residues: ATP-dependent Clp protease adapter protein ClpS (102 aa).

It belongs to the ClpS family. As to quaternary structure, binds to the N-terminal domain of the chaperone ClpA.

Functionally, involved in the modulation of the specificity of the ClpAP-mediated ATP-dependent protein degradation. This Shewanella halifaxensis (strain HAW-EB4) protein is ATP-dependent Clp protease adapter protein ClpS.